The sequence spans 1274 residues: Myosin-1 (1274 aa).

The disordered stretch occupies residues 1 to 28; that stretch reads MAPSKKAGKKGAVGGFLSGASKPQKVQK. One can recognise a Myosin motor domain in the interval 41–721; sequence AGVPDMTLLS…TLFYLEGERD (681 aa). ATP is bound at residue 134 to 141; it reads GESGAGKT. Phosphoserine is present on serine 363. The actin-binding stretch occupies residues 410–492; it reads VIGVLDIYGF…AGIFATLNDA (83 aa). 2 IQ domains span residues 725–745 and 746–771; these read HTMA…KHEA and ATKI…YGHQ. The 191-residue stretch at 779–969 folds into the TH1 domain; sequence RRRFSLLGMR…TIQVGSGEPP (191 aa). Disordered stretches follow at residues 951–1029, 1042–1071, and 1116–1248; these read RGDA…PVVT, ARAP…PKEF, and PSNY…QVAQ. Positions 957–974 are enriched in polar residues; the sequence is KSHTIQVGSGEPPNSLSN. Residues 1042–1053 are compositionally biased toward low complexity; the sequence is ARAPPSIPGRAA. Composition is skewed to pro residues over residues 1054 to 1067 and 1126 to 1138; these read APPP…PAGP and APPP…PPSR. The region spanning 1067–1125 is the SH3 domain; sequence PPKEFYKALYNFTGQEGEMNLVKGEEVEVKEKDDNGWWMVVKNGQEGWAPSNYLKKVEQ. Composition is skewed to low complexity over residues 1139 to 1157 and 1170 to 1226; these read PVAA…PAVT and AASA…IGGK.

Belongs to the TRAFAC class myosin-kinesin ATPase superfamily. Myosin family. Phosphorylation of the TEDS site (Ser-363) is required for the polarization of the actin cytoskeleton. Phosphorylation probably activates the myosin-I ATPase activity.

It is found in the cytoplasm. The protein resides in the cytoskeleton. It localises to the actin patch. Type-I myosin implicated in the organization of the actin cytoskeleton. Required for proper actin cytoskeleton polarization. At the cell cortex, assembles in patch-like structures together with proteins from the actin-polymerizing machinery and promotes actin assembly. Functions as actin nucleation-promoting factor (NPF) for the Arp2/3 complex. This Cryptococcus neoformans var. neoformans serotype D (strain B-3501A) (Filobasidiella neoformans) protein is Myosin-1 (MYO1).